The following is a 394-amino-acid chain: 1-deoxy-D-xylulose 5-phosphate reductoisomerase (394 aa).

Residues Thr12, Gly13, Ser14, Ile15, Gly38, Asn41, and Asn132 each contribute to the NADPH site. A 1-deoxy-D-xylulose 5-phosphate-binding site is contributed by Lys133. Glu134 is a binding site for NADPH. Mn(2+) is bound at residue Asp156. 1-deoxy-D-xylulose 5-phosphate is bound by residues Ser157, Glu158, Ser182, and His205. Glu158 lines the Mn(2+) pocket. Gly211 is an NADPH binding site. 1-deoxy-D-xylulose 5-phosphate is bound by residues Ser218, Asn223, Lys224, and Glu227. Glu227 contributes to the Mn(2+) binding site.

The protein belongs to the DXR family. Mg(2+) serves as cofactor. Requires Mn(2+) as cofactor.

It carries out the reaction 2-C-methyl-D-erythritol 4-phosphate + NADP(+) = 1-deoxy-D-xylulose 5-phosphate + NADPH + H(+). It participates in isoprenoid biosynthesis; isopentenyl diphosphate biosynthesis via DXP pathway; isopentenyl diphosphate from 1-deoxy-D-xylulose 5-phosphate: step 1/6. Functionally, catalyzes the NADPH-dependent rearrangement and reduction of 1-deoxy-D-xylulose-5-phosphate (DXP) to 2-C-methyl-D-erythritol 4-phosphate (MEP). The chain is 1-deoxy-D-xylulose 5-phosphate reductoisomerase from Arthrobacter sp. (strain FB24).